A 115-amino-acid polypeptide reads, in one-letter code: Large ribosomal subunit protein uL18 (115 aa).

Belongs to the universal ribosomal protein uL18 family. Part of the 50S ribosomal subunit; part of the 5S rRNA/L5/L18/L25 subcomplex. Contacts the 5S and 23S rRNAs.

Functionally, this is one of the proteins that bind and probably mediate the attachment of the 5S RNA into the large ribosomal subunit, where it forms part of the central protuberance. In Mycoplasma genitalium (strain ATCC 33530 / DSM 19775 / NCTC 10195 / G37) (Mycoplasmoides genitalium), this protein is Large ribosomal subunit protein uL18.